Reading from the N-terminus, the 149-residue chain is Ribonuclease pancreatic (149 aa).

The first 25 residues, 1-25, serve as a signal peptide directing secretion; that stretch reads MGLEKSLILFPLFFLLLGWVQPSLG. The substrate site is built by Lys32 and Arg35. His37 acts as the Proton acceptor in catalysis. Intrachain disulfides connect Cys51–Cys109, Cys65–Cys120, Cys83–Cys135, and Cys90–Cys97. Residues 66 to 70 and Lys91 contribute to the substrate site; that span reads KPVNT. His144 functions as the Proton donor in the catalytic mechanism.

This sequence belongs to the pancreatic ribonuclease family. As to quaternary structure, monomer. Interacts with and forms tight 1:1 complexes with RNH1. Dimerization of two such complexes may occur. Interaction with RNH1 inhibits this protein. In terms of tissue distribution, pancreas.

The protein localises to the secreted. It catalyses the reaction an [RNA] containing cytidine + H2O = an [RNA]-3'-cytidine-3'-phosphate + a 5'-hydroxy-ribonucleotide-3'-[RNA].. The catalysed reaction is an [RNA] containing uridine + H2O = an [RNA]-3'-uridine-3'-phosphate + a 5'-hydroxy-ribonucleotide-3'-[RNA].. Functionally, endonuclease that catalyzes the cleavage of RNA on the 3' side of pyrimidine nucleotides. Acts on single-stranded and double-stranded RNA. The protein is Ribonuclease pancreatic (Rnase1) of Mus musculus (Mouse).